Here is a 145-residue protein sequence, read N- to C-terminus: Putative antiporter subunit mnhG2 (145 aa).

Helical transmembrane passes span 11-31 (IAAV…IGIV), 51-71 (VLLT…FFSV), and 72-92 (RLLL…HLVA).

The protein belongs to the CPA3 antiporters (TC 2.A.63) subunit G family. As to quaternary structure, may form a heterooligomeric complex that consists of seven subunits: mnhA2, mnhB2, mnhC2, mnhD2, mnhE2, mnhF2 and mnhG2.

It is found in the cell membrane. The polypeptide is Putative antiporter subunit mnhG2 (mnhG2) (Staphylococcus aureus (strain JH9)).